We begin with the raw amino-acid sequence, 356 residues long: Protein-glutamate methylesterase/protein-glutamine glutaminase 3 (356 aa).

Positions 3–120 (KVAIVDDSAV…KGFLEESQAR (118 aa)) constitute a Response regulatory domain. Position 54 is a 4-aspartylphosphate (aspartate 54). A CheB-type methylesterase domain is found at 165–356 (NQTTDRVVAL…AEEIIAFTKQ (192 aa)). Active-site residues include serine 177, histidine 203, and aspartate 299.

Belongs to the CheB family. Phosphorylated by CheA. Phosphorylation of the N-terminal regulatory domain activates the methylesterase activity.

Its subcellular location is the cytoplasm. The enzyme catalyses [protein]-L-glutamate 5-O-methyl ester + H2O = L-glutamyl-[protein] + methanol + H(+). The catalysed reaction is L-glutaminyl-[protein] + H2O = L-glutamyl-[protein] + NH4(+). In terms of biological role, involved in chemotaxis. Part of a chemotaxis signal transduction system that modulates chemotaxis in response to various stimuli. Catalyzes the demethylation of specific methylglutamate residues introduced into the chemoreceptors (methyl-accepting chemotaxis proteins or MCP) by CheR. Also mediates the irreversible deamidation of specific glutamine residues to glutamic acid. In Shewanella oneidensis (strain ATCC 700550 / JCM 31522 / CIP 106686 / LMG 19005 / NCIMB 14063 / MR-1), this protein is Protein-glutamate methylesterase/protein-glutamine glutaminase 3.